The chain runs to 159 residues: RNA pyrophosphohydrolase (159 aa).

A Nudix hydrolase domain is found at 6–149 (GFRPNVGIIL…KREVYRRALK (144 aa)). Residues 38–59 (GGINDRESPEEALYRELNEEVG) carry the Nudix box motif.

It belongs to the Nudix hydrolase family. RppH subfamily. A divalent metal cation is required as a cofactor.

Its function is as follows. Accelerates the degradation of transcripts by removing pyrophosphate from the 5'-end of triphosphorylated RNA, leading to a more labile monophosphorylated state that can stimulate subsequent ribonuclease cleavage. In Ectopseudomonas mendocina (strain ymp) (Pseudomonas mendocina), this protein is RNA pyrophosphohydrolase.